The primary structure comprises 63 residues: Large ribosomal subunit protein uL29 (63 aa).

This sequence belongs to the universal ribosomal protein uL29 family.

This is Large ribosomal subunit protein uL29 from Pseudoalteromonas translucida (strain TAC 125).